The sequence spans 364 residues: Long-wave-sensitive opsin 1 (364 aa).

Residues Met-1–Ala-58 lie on the Extracellular side of the membrane. O-linked (GlcNAc) serine glycosylation is present at Ser-22. Residue Asn-34 is glycosylated (N-linked (GlcNAc...) asparagine). The helical transmembrane segment at Trp-59–Met-79 threads the bilayer. Over Arg-80–Trp-90 the chain is Cytoplasmic. The chain crosses the membrane as a helical span at residues Ile-91 to Val-111. At Val-112–Cys-126 the chain is on the extracellular side. A disulfide bond links Cys-126 and Cys-203. The chain crosses the membrane as a helical span at residues Val-127–Ile-147. Over Ser-148–Leu-168 the chain is Cytoplasmic. The chain crosses the membrane as a helical span at residues Ala-169 to Phe-189. Topologically, residues Gly-190–Tyr-219 are extracellular. The helical transmembrane segment at Met-220–Leu-240 threads the bilayer. Residues Gln-241 to Met-269 lie on the Cytoplasmic side of the membrane. Residues Val-270–Phe-290 traverse the membrane as a helical segment. Over Ala-291–Pro-301 the chain is Extracellular. Residues Leu-302–Phe-324 form a helical membrane-spanning segment. The residue at position 312 (Lys-312) is an N6-(retinylidene)lysine. The Cytoplasmic segment spans residues Met-325–Ala-364.

Belongs to the G-protein coupled receptor 1 family. Opsin subfamily. Post-translationally, phosphorylated on some or all of the serine and threonine residues present in the C-terminal region. In terms of tissue distribution, the three color pigments are found in the cone photoreceptor cells.

The protein resides in the membrane. Functionally, visual pigments are the light-absorbing molecules that mediate vision. They consist of an apoprotein, opsin, covalently linked to cis-retinal. The polypeptide is Long-wave-sensitive opsin 1 (OPN1LW) (Canis lupus familiaris (Dog)).